A 378-amino-acid polypeptide reads, in one-letter code: Wnt inhibitory factor 1 (378 aa).

The signal sequence occupies residues 1–28 (MAFRTPAVQLHLKACVLLLLGGLLEAAY). In terms of domain architecture, WIF spans 36-175 (MWIDANQARI…PHNAIFFKTC (140 aa)). N-linked (GlcNAc...) asparagine glycosylation occurs at N86. Intrachain disulfides connect C138/C175, C180/C190, C184/C196, C212/C222, C216/C228, and C230/C239. EGF-like domains lie at 176 to 205 (QRAKCPGGCRNGGYCNERQVCECQDGFYGV), 208 to 240 (EKALCSPRCLNGGLCMSPGVCICPPGYFGSSCE), 243 to 272 (NCSTTCLNGGTCFHPGKCICAVSFEGVRCE), 272 to 304 (ELSKCRQPCRNGGKCTGRNKCKCSKGYHGDLCS), and 305 to 336 (KAVCEPSCGAHGTCVEPNRCQCREGWHGRHCN). N243 is a glycosylation site (N-linked (GlcNAc...) asparagine). 9 disulfide bridges follow: C244–C254, C248–C260, C262–C271, C276–C286, C280–C292, C294–C303, C308–C318, C312–C324, and C326–C335. Positions 343-378 (VSNSQRVSPSKHKSPSVAAAKEAPETSQPSETNYVV) are disordered. Polar residues predominate over residues 367 to 378 (ETSQPSETNYVV).

Highly expressed in unsegmented paraxial mesoderm.

The protein resides in the secreted. Its function is as follows. Binds to WNT proteins and inhibits their activities. May be involved in mesoderm segmentation. This Danio rerio (Zebrafish) protein is Wnt inhibitory factor 1 (wif1).